We begin with the raw amino-acid sequence, 1038 residues long: E3 ubiquitin-protein ligase Topors (1038 aa).

Positions 53 to 96 (ESGSESGDNEAEEPVSAGPDNANAIGEPGTSASAAEENGTVERN) are disordered. The RING-type zinc-finger motif lies at 102-141 (CAICLSRCRRKCFTDSCMHQFCFKCLCEWSKIKPECPLCK). Residues 495–682 (AAANAEVAAI…SSDSSTTNSE (188 aa)) form an interaction with hairy/hry region. Disordered regions lie at residues 627–858 (DQLR…SSTA) and 972–1038 (GESE…LLPY). The segment covering 633–642 (RSIRSKKSRR) has biased composition (basic residues). Over residues 643-668 (SSMPARSDSGSSPSSCSSSSFHFSSS) the composition is skewed to low complexity. The segment covering 686 to 699 (KKSRKRVANNKRSK) has biased composition (basic residues). Positions 723-744 (QQQISQKKPQRQPESSSDSPSS) are enriched in low complexity. Basic and acidic residues predominate over residues 792-801 (ATLEDRKPVK). The residue at position 820 (threonine 820) is a Phosphothreonine. Serine 822 carries the phosphoserine modification. The segment covering 841-858 (SHSNQSSQSASLASSSTA) has biased composition (low complexity). A compositionally biased stretch (acidic residues) spans 987 to 1031 (EEQDEEDEEDEDQEEDDQEEEKAAEEEEEEEEDDDDSDNHDENDE).

Interacts with hairy/hry, p53 and Top1. Interacts with the gypsy chromatin insulator complex, composed of Cp190, mod(mdg4) and su(Hw); interacts directly with mod(mdg4) and su(Hw). Interacts with Lam/lamin.

The protein localises to the nucleus. It localises to the chromosome. The enzyme catalyses S-ubiquitinyl-[E2 ubiquitin-conjugating enzyme]-L-cysteine + [acceptor protein]-L-lysine = [E2 ubiquitin-conjugating enzyme]-L-cysteine + N(6)-ubiquitinyl-[acceptor protein]-L-lysine.. Functionally, functions as a ubiquitin-protein E3 ligase. Negatively regulates the transcriptional repressor hairy/hry by promoting its ubiquitination and subsequent degradation. Also directs the nuclear organization of the gypsy chromatin insulator. Chromatin insulators are regulatory elements which establish independent domains of transcriptional activity within eukaryotic genomes. Insulators have two defining properties; they can block the communication between an enhancer and a promoter when placed between them, and can also buffer transgenes from position effect variegation (PEV). Insulators are proposed to structure the chromatin fiber into independent domains of differing transcriptional potential by promoting the formation of distinct chromatin loops. This chromatin looping may require the formation of insulator bodies, where homotypic interactions between individual subunits of the insulator complex could promote the clustering of widely spaced insulators at the nuclear periphery. Within the gypsy insulator complex, this protein may promote formation of nuclear insulator bodies by recruiting individual insulator complexes to the nuclear lamina. The protein is E3 ubiquitin-protein ligase Topors (Topors) of Drosophila melanogaster (Fruit fly).